Reading from the N-terminus, the 238-residue chain is E3 ubiquitin-protein ligase ZNRF2 (238 aa).

A disordered region spans residues 1–137; the sequence is MGAKQSGPAA…AGGGPGGPRL (137 aa). Gly2 carries the N-myristoyl glycine lipid modification. 9 positions are modified to phosphoserine: Ser20, Ser24, Ser75, Ser82, Ser107, Ser110, Ser141, Ser147, and Ser189. Over residues 35–77 the composition is skewed to low complexity; the sequence is GARAARFAAPVSGAQQPSASAGAAAAAAAAASAPAAPRSRSLG. The RING-type; atypical zinc-finger motif lies at 195–236; the sequence is CAICLEELQQGDTIARLPCLCIYHKGCIDEWFEVNRSCPEHP.

In terms of assembly, interacts with UBE2N. Interacts with ZNRF1. Interacts (when phosphorylated) with YWHAE. In terms of processing, phosphorylated; leading to binding to YWHAE. Phosphorylated by MTOR at Ser-147 and dephosphorylated by PP6C. Ser-147 phosphorylation stimulates vesicle-to-cytosol translocation. Expressed primarily in the nervous system. Expression is more intense in the granular cell layer of hippocampus, Purkinje cell layer of the cerebellum and the granular cell layer of the olfactory bulb. Detected in sensory neurons but not expressed in sympatic or enteric neurons. Expressed in testis, adipose tissue, columnar epithelial cells of the gut.

It localises to the endosome membrane. The protein localises to the lysosome membrane. Its subcellular location is the presynaptic cell membrane. It is found in the cytoplasm. The catalysed reaction is S-ubiquitinyl-[E2 ubiquitin-conjugating enzyme]-L-cysteine + [acceptor protein]-L-lysine = [E2 ubiquitin-conjugating enzyme]-L-cysteine + N(6)-ubiquitinyl-[acceptor protein]-L-lysine.. It participates in protein modification; protein ubiquitination. In terms of biological role, E3 ubiquitin-protein ligase that plays a role in the establishment and maintenance of neuronal transmission and plasticity. Ubiquitinates the Na(+)/K(+) ATPase alpha-1 subunit/ATP1A1 and thereby influences its endocytosis and/or degradation. Also acts as a positive regulator of mTORC1 activation by amino acids, which functions upstream of the V-ATPase and of Rag-GTPases. In turn, phosphorylation by mTOR leads to its inhibition via targeting to the cytosol allowing a self-regulating feedback mechanism. The sequence is that of E3 ubiquitin-protein ligase ZNRF2 (Znrf2) from Mus musculus (Mouse).